The chain runs to 79 residues: Short neurotoxin 8 (79 aa).

The signal sequence occupies residues 1–21 (MKTLLLTLVMVTIMCLDLGYT). Disulfide bonds link C24-C41, C34-C59, C63-C71, and C72-C77.

Belongs to the three-finger toxin family. Short-chain subfamily. Type III alpha-neurotoxin sub-subfamily. In terms of tissue distribution, expressed by the venom gland.

The protein resides in the secreted. In terms of biological role, binds with high affinity to muscle nicotinic acetylcholine receptor (nAChR) and hinders acetylcholine binding to the receptor, thereby impairing neuromuscular transmission. Causes muscle paralysis, spasms and increased respiration. The polypeptide is Short neurotoxin 8 (Pseudonaja textilis (Eastern brown snake)).